Reading from the N-terminus, the 483-residue chain is Shutoff alkaline exonuclease (483 aa).

The protein belongs to the herpesviridae alkaline nuclease family. Forms a complex with the DNA polymerase, the DNA polymerase processivity factor, and the major DNA binding protein.

The protein resides in the host nucleus. It is found in the host cytoplasm. Its function is as follows. Plays a role in processing non linear or branched viral DNA intermediates in order to promote the production of mature packaged unit-length linear progeny viral DNA molecules. Exhibits endonuclease and exonuclease activities and accepts both double-stranded and single-stranded DNA as substrate. Exonuclease digestion of DNA is in the 5'-&gt; 3' direction and the products are 5'-monophosphate nucleosides. Additionally, forms a recombinase with the major DNA-binding protein, which displays strand exchange activity. Also acts as a cytoplasmic RNA endonuclease that induces degradation of the majority of the cellular messenger RNAs during early lytic infection. The resulting inhibition of cellular protein synthesis serves to ensure maximal viral gene expression and evasion from host immune response. Internally cleaves host mRNAs which are then degraded by the cellular exonuclease XRN1. Bypasses therefore the regulatory steps of deadenylation and decapping normally required for XRN1 activation. This chain is Shutoff alkaline exonuclease (37), found in Saimiriine herpesvirus 2 (strain 11) (SaHV-2).